Consider the following 138-residue polypeptide: Translation initiation factor 2 subunit beta (138 aa).

The protein belongs to the eIF-2-beta/eIF-5 family. Heterotrimer composed of an alpha, a beta and a gamma chain.

In terms of biological role, eIF-2 functions in the early steps of protein synthesis by forming a ternary complex with GTP and initiator tRNA. The polypeptide is Translation initiation factor 2 subunit beta (Methanococcus maripaludis (strain C6 / ATCC BAA-1332)).